The following is a 182-amino-acid chain: UPF0316 protein BCG9842_B1857 (182 aa).

Transmembrane regions (helical) follow at residues 6-26, 32-52, and 58-78; these read LIFV…ILLV, SAAG…GIVF, and WMNI…GGYI.

Belongs to the UPF0316 family.

The protein localises to the cell membrane. This Bacillus cereus (strain G9842) protein is UPF0316 protein BCG9842_B1857.